Reading from the N-terminus, the 475-residue chain is Ammonium transporter 2 (475 aa).

The next 11 membrane-spanning stretches (helical) occupy residues 27–47, 55–75, 120–140, 148–168, 183–203, 218–238, 254–274, 279–299, 302–322, 336–356, and 389–409; these read AATLVGLQSMPGLVILYASIV, SAFMALYAFAAVLLCWVLLCY, LVYFQFTFAAITTILVAGSVL, WMAFVPLWLIFSYTVGAYSIW, GGYVIHLSSGVAGFVAAYWVG, VLLMLAGAGLLWMGWSGFNGG, TNLSAATSLLVWTTLDVIFFG, IGAIQGMVTGLAGVTPGAGLI, WAAIIIGVVSGTAPWASMMII, LAVFYTHAVAGLLGGIMTGLF, and AGAAFIAVWNVVSTTIILLAI.

Belongs to the ammonia transporter channel (TC 1.A.11.2) family. In terms of tissue distribution, higher expression in shoots than roots.

Its subcellular location is the cell membrane. In terms of biological role, high affinity ammonium transporter that may play an important role in moving ammonium between the apoplast and symplast of cells throughout the plant. Does not transport methylammonium. This is Ammonium transporter 2 (AMT2) from Arabidopsis thaliana (Mouse-ear cress).